Reading from the N-terminus, the 888-residue chain is Calcium-transporting ATPase 1 (888 aa).

Helical transmembrane passes span 53–75 (IFAQ…SAFV), 79–97 (ADAS…IGVV), 246–266 (VGKY…LIGF), and 283–303 (AVAA…AIGV). 4 residues coordinate Ca(2+): Val-284, Ala-285, Ile-287, and Glu-289. The 4-aspartylphosphate intermediate role is filled by Asp-331. 6 helical membrane passes run 675–695 (ILFL…AILL), 703–723 (PIHI…SLGV), 747–767 (VPFL…AFIA), 791–811 (LLHA…VHSF), 831–851 (LVFS…IPPL), and 865–885 (WGFV…IKLA). Positions 710 and 714 each coordinate Ca(2+).

This sequence belongs to the cation transport ATPase (P-type) (TC 3.A.3) family. Type IIA subfamily.

It localises to the cell membrane. The catalysed reaction is Ca(2+)(in) + ATP + H2O = Ca(2+)(out) + ADP + phosphate + H(+). Inhibited by cyclopiazonic acid (CPA). Its function is as follows. Catalyzes the hydrolysis of ATP coupled with the transport of calcium. This Bacillus cereus (strain ATCC 10987 / NRS 248) protein is Calcium-transporting ATPase 1.